A 78-amino-acid polypeptide reads, in one-letter code: DNA-directed RNA polymerase subunit omega (78 aa).

The protein belongs to the RNA polymerase subunit omega family. As to quaternary structure, in cyanobacteria the RNAP catalytic core is composed of 2 alpha, 1 beta, 1 beta', 1 gamma and 1 omega subunit. When a sigma factor is associated with the core the holoenzyme is formed, which can initiate transcription.

The enzyme catalyses RNA(n) + a ribonucleoside 5'-triphosphate = RNA(n+1) + diphosphate. In terms of biological role, promotes RNA polymerase assembly. Latches the N- and C-terminal regions of the beta' subunit thereby facilitating its interaction with the beta and alpha subunits. This Prochlorococcus marinus (strain MIT 9312) protein is DNA-directed RNA polymerase subunit omega.